A 158-amino-acid polypeptide reads, in one-letter code: Small ribosomal subunit protein eS10 (158 aa).

The segment at 99–158 (ETVRRGAVGRPDAPARSAEDRSAYRRAPTTPAAHDKKADVGPGSADLEFRGGFGRGRPAP) is disordered. The segment covering 149-158 (GGFGRGRPAP) has biased composition (gly residues).

It belongs to the eukaryotic ribosomal protein eS10 family.

It is found in the cytoplasm. The protein is Small ribosomal subunit protein eS10 (RpS10) of Spodoptera frugiperda (Fall armyworm).